The chain runs to 319 residues: tRNA uridine(34) hydroxylase (319 aa).

The Rhodanese domain occupies 125 to 219 (LDENTVVIDA…YGKDPEVQGD (95 aa)). Cysteine 179 (cysteine persulfide intermediate) is an active-site residue.

The protein belongs to the TrhO family.

The enzyme catalyses uridine(34) in tRNA + AH2 + O2 = 5-hydroxyuridine(34) in tRNA + A + H2O. In terms of biological role, catalyzes oxygen-dependent 5-hydroxyuridine (ho5U) modification at position 34 in tRNAs. This chain is tRNA uridine(34) hydroxylase, found in Lactococcus lactis subsp. lactis (strain IL1403) (Streptococcus lactis).